Here is a 151-residue protein sequence, read N- to C-terminus: Aspartate carbamoyltransferase regulatory chain (151 aa).

Residues cysteine 108, cysteine 113, cysteine 138, and cysteine 141 each contribute to the Zn(2+) site.

This sequence belongs to the PyrI family. In terms of assembly, contains catalytic and regulatory chains. It depends on Zn(2+) as a cofactor.

In terms of biological role, involved in allosteric regulation of aspartate carbamoyltransferase. The sequence is that of Aspartate carbamoyltransferase regulatory chain from Pyrobaculum arsenaticum (strain DSM 13514 / JCM 11321 / PZ6).